Reading from the N-terminus, the 472-residue chain is Adenylyl cyclase-associated protein 1 (472 aa).

Residue Ala-2 is modified to N-acetylalanine. Tyr-31 bears the Phosphotyrosine mark. The residue at position 34 (Ser-34) is a Phosphoserine. Lys-81 is subject to N6-acetyllysine. The interval 216–253 (ELSGLPSGPSAGSGPPPPPPGPPPPPVPTSSGSDDSAS) is disordered. Low complexity predominate over residues 218–228 (SGLPSGPSAGS). Residues 229–243 (GPPPPPPGPPPPPVP) are compositionally biased toward pro residues. Residues 244 to 253 (TSSGSDDSAS) show a composition bias toward low complexity. Lys-287 is subject to N6-methyllysine. Phosphoserine occurs at positions 290, 295, and 301. The disordered stretch occupies residues 290 to 312 (SGLIRSGPKPFSASKPDPPKPVA). Residues 307–450 (PPKPVAKKEP…EGGDFNEFPV (144 aa)) form the C-CAP/cofactor C-like domain. Lys-345 participates in a covalent cross-link: Glycyl lysine isopeptide (Lys-Gly) (interchain with G-Cter in SUMO1).

This sequence belongs to the CAP family. In terms of assembly, homodimer. Binds actin monomers.

It localises to the cell membrane. Functionally, directly regulates filament dynamics and has been implicated in a number of complex developmental and morphological processes, including mRNA localization and the establishment of cell polarity. This is Adenylyl cyclase-associated protein 1 (CAP1) from Bos taurus (Bovine).